A 282-amino-acid polypeptide reads, in one-letter code: MKDNIVTVKHLSFTYKDSKVPAVNDISFSIPRGSWTTLVGHNGSGKSTIARLLDGILLPHDNPRTVINVDGIELTEKTMWDIRDRVGIVFQNPDNQFVGATVEDDVAFGLENRQVSRSKMQTIVHDVLEQVDMLDFQKSEPQYLSGGQKQRVAIAGILAIGPKLIILDESTSMLDPAGKTKILSLIRDLQNKNGLTIFSITHDINEAVQADQMLVLDKGKLLASGSPREIFENEVLIKSAGLELPLFYKVKNELIKKEIHIPREVNSEEKLVKYLCQLNSKM.

Positions 6–243 (VTVKHLSFTY…EVLIKSAGLE (238 aa)) constitute an ABC transporter domain. Residue 40–47 (GHNGSGKS) participates in ATP binding.

It belongs to the ABC transporter superfamily. Energy-coupling factor EcfA family. In terms of assembly, forms a stable energy-coupling factor (ECF) transporter complex composed of 2 membrane-embedded substrate-binding proteins (S component), 2 ATP-binding proteins (A component) and 2 transmembrane proteins (T component).

It is found in the cell membrane. Functionally, ATP-binding (A) component of a common energy-coupling factor (ECF) ABC-transporter complex. Unlike classic ABC transporters this ECF transporter provides the energy necessary to transport a number of different substrates. In Lactobacillus johnsonii (strain CNCM I-12250 / La1 / NCC 533), this protein is Energy-coupling factor transporter ATP-binding protein EcfA1.